Consider the following 378-residue polypeptide: Alpha-galactosidase (378 aa).

The N-terminal stretch at 1 to 15 (MVKSPGTEDYTRRSL) is a signal peptide. 2 cysteine pairs are disulfide-bonded: C36–C68 and C116–C147. D145 acts as the Nucleophile in catalysis. Residue 178–182 (EWGEE) participates in substrate binding. Residue D200 is the Proton donor of the active site.

This sequence belongs to the glycosyl hydrolase 27 family.

The enzyme catalyses Hydrolysis of terminal, non-reducing alpha-D-galactose residues in alpha-D-galactosides, including galactose oligosaccharides, galactomannans and galactolipids.. Its function is as follows. Preferentially cleaves alpha-1,3 and alpha-1,4 glycoside linkages. Involved in the hydrolysis of the galactomannan, it splits alpha-linked galactose moieties. It is particularly suitable for the hydrolysis of guar gum to a gum with improved gelling properties. Can cleave terminal alpha-1,3-linked galactose residues responsible for blood group B specificity from the surface of erythrocytes thereby converting these cells serologically to group O. This chain is Alpha-galactosidase, found in Coffea arabica (Arabian coffee).